The primary structure comprises 220 residues: Large ribosomal subunit protein uL3 (220 aa).

The disordered stretch occupies residues 145–169 (GPASHGSKFHRRPGSSGNRTWPGRV).

It belongs to the universal ribosomal protein uL3 family. In terms of assembly, part of the 50S ribosomal subunit. Forms a cluster with proteins L14 and L19.

Its function is as follows. One of the primary rRNA binding proteins, it binds directly near the 3'-end of the 23S rRNA, where it nucleates assembly of the 50S subunit. The sequence is that of Large ribosomal subunit protein uL3 from Bdellovibrio bacteriovorus (strain ATCC 15356 / DSM 50701 / NCIMB 9529 / HD100).